The primary structure comprises 185 residues: uncharacterized protein (185 aa).

It belongs to the PIGL family.

This is an uncharacterized protein from Escherichia coli (strain K12).